A 586-amino-acid chain; its full sequence is Arginine--tRNA ligase (586 aa).

Positions 128-138 match the 'HIGH' region motif; sequence ANPTGPLHVGH.

The protein belongs to the class-I aminoacyl-tRNA synthetase family. Monomer.

The protein localises to the cytoplasm. The catalysed reaction is tRNA(Arg) + L-arginine + ATP = L-arginyl-tRNA(Arg) + AMP + diphosphate. In Legionella pneumophila (strain Corby), this protein is Arginine--tRNA ligase.